The chain runs to 299 residues: 21S rRNA pseudouridine(2819) synthase (299 aa).

The active site involves Asp-106.

It belongs to the pseudouridine synthase RluA family.

Its subcellular location is the mitochondrion. The catalysed reaction is uridine(2819) in 21S rRNA = pseudouridine(2819) in 21S rRNA. Its function is as follows. Pseudouridylate synthase responsible for the pseudouridine-2819 formation in mitochondrial 21S rRNA. May modulate the efficiency or the fidelity of the mitochondrial translation machinery. This Kluyveromyces lactis (strain ATCC 8585 / CBS 2359 / DSM 70799 / NBRC 1267 / NRRL Y-1140 / WM37) (Yeast) protein is 21S rRNA pseudouridine(2819) synthase (PUS5).